We begin with the raw amino-acid sequence, 388 residues long: Pregnancy-associated glycoprotein (388 aa).

An N-terminal signal peptide occupies residues 1–15; that stretch reads MKWFGVLGLVTLSEC. Residues 74–385 enclose the Peptidase A1 domain; sequence YMGIISVGTP…DRENDRIGLA (312 aa). Aspartate 92 is an active-site residue. Intrachain disulfides connect cysteine 105–cysteine 110 and cysteine 266–cysteine 270. Residue aspartate 275 is part of the active site. Cysteines 309 and 344 form a disulfide. Residue asparagine 356 is glycosylated (N-linked (GlcNAc...) asparagine).

This sequence belongs to the peptidase A1 family. As to expression, trophoblast and placental tissue.

It localises to the secreted. The protein localises to the extracellular space. This Equus caballus (Horse) protein is Pregnancy-associated glycoprotein (PAG).